A 293-amino-acid chain; its full sequence is Eukaryotic translation initiation factor 3 subunit F (293 aa).

Alanine 2 carries the N-acetylalanine modification. The MPN domain occupies 28–159 (ARIHPLVIFN…IKAFVSSNLS (132 aa)).

Belongs to the eIF-3 subunit F family. As to quaternary structure, component of the eukaryotic translation initiation factor 3 (eIF-3) complex. Binds to TIF3E1 and TIF3H1. In terms of tissue distribution, expressed in inflorescences, leaves, stems, siliques, roots and seedlings. Accumulates at highly levels in pollen grains, developing embryos and root tips.

The protein resides in the cytoplasm. Its function is as follows. Component of the eukaryotic translation initiation factor 3 (eIF-3) complex, which is involved in protein synthesis of a specialized repertoire of mRNAs and, together with other initiation factors, stimulates binding of mRNA and methionyl-tRNAi to the 40S ribosome. The eIF-3 complex specifically targets and initiates translation of a subset of mRNAs involved in cell proliferation (Potential). Involved in cell growth and differentiation, especially during embryogenesis and male gametophyte germination. Regulates sensitivity to sugars (e.g. sucrose). This is Eukaryotic translation initiation factor 3 subunit F (TIF3F1) from Arabidopsis thaliana (Mouse-ear cress).